Here is a 211-residue protein sequence, read N- to C-terminus: 1-deoxy-D-xylulose 5-phosphate reductoisomerase (211 aa).

Residue Asp-14 participates in Mn(2+) binding. Ser-15, Glu-16, Ser-40, His-63, Ser-76, Asn-81, Lys-82, and Glu-85 together coordinate 1-deoxy-D-xylulose 5-phosphate. Glu-16 provides a ligand contact to Mn(2+). A Mn(2+)-binding site is contributed by Glu-85.

This sequence belongs to the DXR family. Requires Mn(2+) as cofactor. It depends on Mg(2+) as a cofactor. Mostly expressed in flowers and, to a lower extent, in leaves.

Its subcellular location is the plastid. It is found in the chloroplast stroma. It carries out the reaction 2-C-methyl-D-erythritol 4-phosphate + NADP(+) = 1-deoxy-D-xylulose 5-phosphate + NADPH + H(+). The protein operates within isoprenoid biosynthesis; isopentenyl diphosphate biosynthesis via DXP pathway; isopentenyl diphosphate from 1-deoxy-D-xylulose 5-phosphate: step 1/6. Enzyme of the plastid non-mevalonate pathway for isoprenoid biosynthesis that catalyzes the NADPH-dependent rearrangement and reduction of 1-deoxy-D-xylulose-5-phosphate (DXP) to 2-C-methyl-D-erythritol 4-phosphate (MEP). Required for chloroplast development. This Thymus vulgaris (Thyme) protein is 1-deoxy-D-xylulose 5-phosphate reductoisomerase.